The primary structure comprises 107 residues: Integration host factor subunit beta (107 aa).

Positions 55-107 (RRPARVGRNPKSGEKVQVPEKHVPHFKPGKELRERVDGRAGEPLKNDEPEDAQ) are disordered. A compositionally biased stretch (basic and acidic residues) spans 65–101 (KSGEKVQVPEKHVPHFKPGKELRERVDGRAGEPLKND).

Belongs to the bacterial histone-like protein family. Heterodimer of an alpha and a beta chain.

Its function is as follows. This protein is one of the two subunits of integration host factor, a specific DNA-binding protein that functions in genetic recombination as well as in transcriptional and translational control. This Burkholderia pseudomallei (strain K96243) protein is Integration host factor subunit beta.